Reading from the N-terminus, the 177-residue chain is Large ribosomal subunit protein uL6 (177 aa).

This sequence belongs to the universal ribosomal protein uL6 family. In terms of assembly, part of the 50S ribosomal subunit.

This protein binds to the 23S rRNA, and is important in its secondary structure. It is located near the subunit interface in the base of the L7/L12 stalk, and near the tRNA binding site of the peptidyltransferase center. The polypeptide is Large ribosomal subunit protein uL6 (Bartonella quintana (strain Toulouse) (Rochalimaea quintana)).